Here is a 105-residue protein sequence, read N- to C-terminus: Putative neurotoxin 10 (105 aa).

The N-terminal stretch at methionine 1–alanine 21 is a signal peptide.

The protein belongs to the scolopendra neurotoxin 10 family. In terms of processing, contains 3 disulfide bonds. Expressed by the venom gland.

The protein localises to the secreted. The sequence is that of Putative neurotoxin 10 from Scolopendra mutilans (Chinese red-headed centipede).